Reading from the N-terminus, the 693-residue chain is Lamina-associated polypeptide 2, isoforms alpha/zeta (693 aa).

The LEM-like domain maps to 5-48 (LEDPSVLTKDKLKSELVANNVTLPAGEQRKDVYVQLYLQHLTAR). Disordered stretches follow at residues 48 to 113 (RNRP…DVTE), 148 to 211 (LREQ…LAST), and 227 to 270 (TRPP…KLAP). Residues 49–107 (NRPPLAAGANSKGPPDFSSDEEREPTPVLGSGASVGRGRGAVGRKATKKTDKPRLEDKD) form a linker region. Residues Ser-59, Ser-66, and Ser-67 each carry the phosphoserine modification. Thr-74 carries the phosphothreonine modification. Residues Ser-79 and Ser-82 each carry the phosphoserine modification. Arg-85 and Arg-87 each carry omega-N-methylarginine. A compositionally biased stretch (basic and acidic residues) spans 96-105 (KKTDKPRLED). The LEM domain maps to 108–152 (DLDVTELSNEELLDQLVRYGVNPGPIVGTTRKLYEKKLLKLREQG). Residue Thr-153 is modified to Phosphothreonine. Positions 154-177 (ESRSSTPLPTVSSSAENTRQNGSN) are enriched in polar residues. Residues Ser-155 and Ser-158 each carry the phosphoserine modification. Phosphothreonine occurs at positions 159 and 163. Residues Ser-165 and Ser-167 each carry the phosphoserine modification. A compositionally biased stretch (basic and acidic residues) spans 178 to 190 (DSDRYSDNDEGKK). Positions 190 to 196 (KKEHKKV) match the Nuclear localization signal motif. Ser-206 bears the N6-acetyllysine mark. Over residues 245–254 (TKRDPPRETC) the composition is skewed to basic and acidic residues. Ser-310 carries the post-translational modification Phosphoserine. Arg-329 carries the post-translational modification Omega-N-methylarginine. Positions 332–351 (KSRAQPLRAEEPGVSDQSVF) are disordered. Phosphoserine is present on residues Ser-349, Ser-352, Ser-368, Ser-420, and Ser-422. A compositionally biased stretch (low complexity) spans 412–422 (QSSYQDSESLS). The segment at 412–442 (QSSYQDSESLSPPRKVPRLSEKPARGGDSGS) is disordered. Positions 557–656 (TESCDKHLDL…MGRRYLWLKD (100 aa)) form a coiled coil. Position 655 is an N6-acetyllysine (Lys-655).

This sequence belongs to the LEM family. In terms of assembly, homooligomer. Interacts with LMNA, BANF1 and RB1 and with chromosomes. Associates directly or indirectly with lamins at specific cell-cycle stages. Interacts with CMTM6. Phosphorylated in a mitose-specific manner.

It is found in the nucleus. The protein localises to the chromosome. Functionally, may be involved in the structural organization of the nucleus and in the post-mitotic nuclear assembly. Plays an important role, together with LMNA, in the nuclear anchorage of RB1. This is Lamina-associated polypeptide 2, isoforms alpha/zeta (Tmpo) from Mus musculus (Mouse).